The primary structure comprises 307 residues: Acetaldehyde dehydrogenase (307 aa).

C131 acts as the Acyl-thioester intermediate in catalysis. Residues 162-170 (SIGPGTRKN) and N273 each bind NAD(+).

Belongs to the acetaldehyde dehydrogenase family.

The catalysed reaction is acetaldehyde + NAD(+) + CoA = acetyl-CoA + NADH + H(+). The chain is Acetaldehyde dehydrogenase (nahO) from Stutzerimonas stutzeri (Pseudomonas stutzeri).